The sequence spans 201 residues: ATP-dependent Clp protease proteolytic subunit (201 aa).

Residue Ser98 is the Nucleophile of the active site. His123 is a catalytic residue.

The protein belongs to the peptidase S14 family. In terms of assembly, fourteen ClpP subunits assemble into 2 heptameric rings which stack back to back to give a disk-like structure with a central cavity, resembling the structure of eukaryotic proteasomes.

The protein localises to the cytoplasm. The enzyme catalyses Hydrolysis of proteins to small peptides in the presence of ATP and magnesium. alpha-casein is the usual test substrate. In the absence of ATP, only oligopeptides shorter than five residues are hydrolyzed (such as succinyl-Leu-Tyr-|-NHMec, and Leu-Tyr-Leu-|-Tyr-Trp, in which cleavage of the -Tyr-|-Leu- and -Tyr-|-Trp bonds also occurs).. Functionally, cleaves peptides in various proteins in a process that requires ATP hydrolysis. Has a chymotrypsin-like activity. Plays a major role in the degradation of misfolded proteins. The protein is ATP-dependent Clp protease proteolytic subunit of Rickettsia felis (strain ATCC VR-1525 / URRWXCal2) (Rickettsia azadi).